The sequence spans 180 residues: UPF0340 protein RBAM_034070 (180 aa).

Belongs to the UPF0340 family.

In Bacillus velezensis (strain DSM 23117 / BGSC 10A6 / LMG 26770 / FZB42) (Bacillus amyloliquefaciens subsp. plantarum), this protein is UPF0340 protein RBAM_034070.